A 206-amino-acid chain; its full sequence is MDCGLYIITDEILAPGCSHIQIAKESLSGGAKIIQLRDKRRNAAELYAIAQEIRSLCTQHHARFIVNDRLDIALAVQADGVHLGQDDLPLSAARLLAPRPFIIGVSVGTVEEAVLAEKGGADYLGVGPVYPTGTKADAGPAVGPGLIRSIRERVAIPIIAIGGINLTNAGDVLAAGADGIAVISAVICSPDIAAASRKFADLMIHS.

4-amino-2-methyl-5-(diphosphooxymethyl)pyrimidine is bound by residues 35 to 39 and Asn67; that span reads QLRDK. 2 residues coordinate Mg(2+): Asp68 and Asp87. Ser106 provides a ligand contact to 4-amino-2-methyl-5-(diphosphooxymethyl)pyrimidine. A 2-[(2R,5Z)-2-carboxy-4-methylthiazol-5(2H)-ylidene]ethyl phosphate-binding site is contributed by 132–134; that stretch reads TGT. Lys135 is a binding site for 4-amino-2-methyl-5-(diphosphooxymethyl)pyrimidine. 2-[(2R,5Z)-2-carboxy-4-methylthiazol-5(2H)-ylidene]ethyl phosphate is bound by residues Gly163 and 183 to 184; that span reads IS.

It belongs to the thiamine-phosphate synthase family. The cofactor is Mg(2+).

It carries out the reaction 2-[(2R,5Z)-2-carboxy-4-methylthiazol-5(2H)-ylidene]ethyl phosphate + 4-amino-2-methyl-5-(diphosphooxymethyl)pyrimidine + 2 H(+) = thiamine phosphate + CO2 + diphosphate. The catalysed reaction is 2-(2-carboxy-4-methylthiazol-5-yl)ethyl phosphate + 4-amino-2-methyl-5-(diphosphooxymethyl)pyrimidine + 2 H(+) = thiamine phosphate + CO2 + diphosphate. The enzyme catalyses 4-methyl-5-(2-phosphooxyethyl)-thiazole + 4-amino-2-methyl-5-(diphosphooxymethyl)pyrimidine + H(+) = thiamine phosphate + diphosphate. It participates in cofactor biosynthesis; thiamine diphosphate biosynthesis; thiamine phosphate from 4-amino-2-methyl-5-diphosphomethylpyrimidine and 4-methyl-5-(2-phosphoethyl)-thiazole: step 1/1. In terms of biological role, condenses 4-methyl-5-(beta-hydroxyethyl)thiazole monophosphate (THZ-P) and 2-methyl-4-amino-5-hydroxymethyl pyrimidine pyrophosphate (HMP-PP) to form thiamine monophosphate (TMP). In Methanospirillum hungatei JF-1 (strain ATCC 27890 / DSM 864 / NBRC 100397 / JF-1), this protein is Thiamine-phosphate synthase.